We begin with the raw amino-acid sequence, 648 residues long: ABC transporter G family member 14 (648 aa).

Residues 53–304 (LKFEEVVYKV…FSSLGFSTSL (252 aa)) form the ABC transporter domain. 99 to 106 (GPSGSGKT) is a binding site for ATP. N346 is a glycosylation site (N-linked (GlcNAc...) asparagine). Residues 384–590 (YQFTVLLQRG…CYKLLLGIQY (207 aa)) enclose the ABC transmembrane type-2 domain. A run of 7 helical transmembrane segments spans residues 405 to 425 (LRIF…WHTP), 435 to 455 (LLFF…VFTF), 485 to 505 (LPLE…MGGL), 512 to 532 (FILS…LGLA), 543 to 562 (ATTL…GYYV), 569 to 591 (IVWL…IQYT), and 620 to 640 (LWID…MAYM).

This sequence belongs to the ABC transporter superfamily. ABCG family. Eye pigment precursor importer (TC 3.A.1.204) subfamily. In terms of assembly, forms heterodimers with ABCG11. In terms of tissue distribution, accumulates primarily in the pericycle and stelar cells of roots. Expressed in leaves, stems, flowers and siliques, and, at low levels, in roots. Accumulates in the phloem.

The protein resides in the cell membrane. In terms of biological role, positive regulator of plant growth which acts as an efflux pump involved in the major root-to-shoot (acropetal) long-distance cytokinin (CK) transport via the xylem sap. Together with ABCG9 and ABCG11, required for vascular development by regulating lipid/sterol homeostasis. Involved in CK-dependent responses to oxidative stress such as hydrogen peroxide H(2)O(2). Its function is as follows. (Microbial infection) Required for SNC1-mediated defense response against the virulent pathogen Pseudomonas syringae pv. tomato DC3000 by promoting the accumulation of trans-zeatin (tZ)-type cytokinins (CK) in the shoot. In Arabidopsis thaliana (Mouse-ear cress), this protein is ABC transporter G family member 14.